The sequence spans 485 residues: GlcNAc-binding protein A (485 aa).

The N-terminal stretch at 1–23 (MKKQPKMTAIALILSGISGLAYG) is a signal peptide. A Chitin-binding type-4 domain is found at 24 to 201 (HGYVSAVENG…SFYNVIDVKF (178 aa)). Residues 437–478 (AGTKVLASDGAIYQCKPWPYSGYCQQWTSNATQYQPGTGSHW) form the Chitin-binding type-3 domain.

It belongs to the GbpA family.

It is found in the secreted. Functionally, probably interacts with GlcNAc residues. May promote attachment to both epithelial cell surfaces and chitin. The sequence is that of GlcNAc-binding protein A from Vibrio cholerae serotype O1 (strain M66-2).